An 894-amino-acid polypeptide reads, in one-letter code: E3 ubiquitin-protein ligase SH3RF1 (894 aa).

Residues 12 to 53 (CPVCLERLDASAKVLPCQHTFCKRCLLGIVGSRNELRCPECR) form an RING-type zinc finger. SH3 domains lie at 134–193 (PQLP…IIKP) and 196–259 (QPPP…FNSA). The interval 274 to 323 (VDTAECPSATAAQSSSASKHSDTKKNTRKRHSFTSLTMANKSSQASQNRH) is disordered. The segment covering 281-291 (SATAAQSSSAS) has biased composition (low complexity). Positions 293-363 (HSDTKKNTRK…APSQVHISTT (71 aa)) are interaction with RAC1. The residue at position 305 (S305) is a Phosphoserine. Positions 306 to 322 (FTSLTMANKSSQASQNR) are enriched in polar residues. Residues 448–551 (HLRPQTRPSV…STAGGPAQKP (104 aa)) form an interaction with AKT2 region. The 62-residue stretch at 453–514 (TRPSVYVAIY…PGNYVAPVTR (62 aa)) folds into the SH3 3 domain. Disordered stretches follow at residues 526 to 556 (MSTA…GNGV) and 682 to 751 (LETE…PTLD). Position 540 is a phosphoserine (S540). A compositionally biased stretch (polar residues) spans 700–713 (SPESAASACGNSSA). Over residues 715–726 (KPDKDSKKEKKG) the composition is skewed to basic and acidic residues. S743 is subject to Phosphoserine. The SH3 4 domain occupies 835 to 894 (VVCERHRVVVSYPPQSEAELELKEGDIVFVHKKREDGWFKGTLQRNGKTGLFPGSFVENI).

It belongs to the SH3RF family. As to quaternary structure, interacts with HERP1. Interacts with RAC1; in a GTP-dependent manner. Interacts with MAP3K10/MLK2 and MAP3K11/MLK3. Interacts with MAPK8IP; this interaction leads to the PJAC complex (POSH-JIP or SH3RF1/MAPK8IP apoptotic complex) with a 1:1 ratio. Interacts with SIAH1. Probably part of a signaling complex that may contain SH3RF1, MAPK8IP, DLK1, MAP2K4/MKK4, MAP2K7/MKK7, MAPK8/JNK1, MAPK9/JNK2, AKT1 and AKT2. Found in a complex with RAC2, MAP3K7/TAK1, MAP2K7/MKK7, MAPK8IP1/JIP1, MAPK8/JNK1 and MAPK9/JNK2. Found in a complex with RAC1, MAP3K11/MLK3, MAP2K7/MKK7, MAPK8IP1/JIP1 and MAPK8/JNK1. Interacts with SH3RF2. Phosphorylated at Ser-305 by AKT1 and AKT2. When phosphorylated, it has reduced ability to bind Rac. In terms of processing, autoubiquitinated. Ubiquitinated by SH3RF2, leading to proteasome-mediated degradation.

The protein localises to the cytoplasm. The protein resides in the perinuclear region. It localises to the cell projection. It is found in the lamellipodium. Its subcellular location is the golgi apparatus. The protein localises to the trans-Golgi network. It carries out the reaction S-ubiquitinyl-[E2 ubiquitin-conjugating enzyme]-L-cysteine + [acceptor protein]-L-lysine = [E2 ubiquitin-conjugating enzyme]-L-cysteine + N(6)-ubiquitinyl-[acceptor protein]-L-lysine.. The protein operates within protein modification; protein ubiquitination. Its function is as follows. Has E3 ubiquitin-protein ligase activity. In the absence of an external substrate, it can catalyze self-ubiquitination. Stimulates ubiquitination of potassium channel KCNJ1, enhancing it's dynamin-dependent and clathrin-independent endocytosis. Acts as a scaffold protein that coordinates with MAPK8IP1/JIP1 in organizing different components of the JNK pathway, including RAC1 or RAC2, MAP3K11/MLK3 or MAP3K7/TAK1, MAP2K7/MKK7, MAPK8/JNK1 and/or MAPK9/JNK2 into a functional multiprotein complex to ensure the effective activation of the JNK signaling pathway. Regulates the differentiation of CD4(+) and CD8(+) T-cells and promotes T-helper 1 (Th1) cell differentiation. Regulates the activation of MAPK8/JNK1 and MAPK9/JNK2 in CD4(+) T-cells and the activation of MAPK8/JNK1 in CD8(+) T-cells. Plays a crucial role in the migration of neocortical neurons in the developing brain. Controls proper cortical neuronal migration and the formation of proximal cytoplasmic dilation in the leading process (PCDLP) in migratory neocortical neurons by regulating the proper localization of activated RAC1 and F-actin assembly. The polypeptide is E3 ubiquitin-protein ligase SH3RF1 (Sh3rf1) (Rattus norvegicus (Rat)).